We begin with the raw amino-acid sequence, 567 residues long: Zinc finger protein 512 (567 aa).

A disordered region spans residues 1 to 32; that stretch reads MSSRLGAVPATSGPTTFKQQRSTRIVGAKNSR. A compositionally biased stretch (polar residues) spans 12–23; it reads SGPTTFKQQRST. Residues Lys18 and Lys84 each participate in a glycyl lysine isopeptide (Lys-Gly) (interchain with G-Cter in SUMO2) cross-link. Positions 86–148 are disordered; that stretch reads AATSHVEGSG…QARRIRKEPP (63 aa). Residues 119–130 show a composition bias toward basic residues; the sequence is KKHKLYGRKQRP. A C2H2-type 1 zinc finger spans residues 197-220; the sequence is FTCHHCGKQLRSLAGMKYHVMANH. Lys227 is covalently cross-linked (Glycyl lysine isopeptide (Lys-Gly) (interchain with G-Cter in SUMO2)). A C2H2-type 2 zinc finger spans residues 287–310; that stretch reads LKCHHCGKPYRSKAGLAYHLRSEH. Residue Lys333 forms a Glycyl lysine isopeptide (Lys-Gly) (interchain with G-Cter in SUMO2) linkage. A C2H2-type 3; atypical zinc finger spans residues 406–430; the sequence is IQCPNQGCEAVYSSVSGLKAHLGSC. A C2H2-type 4 zinc finger spans residues 440-463; the sequence is YKCLLCQKEFVSESGVKYHINSVH. The segment at 486–567 is disordered; that stretch reads QRQQEEEKRR…PKTNHKRGRK (82 aa). Over residues 495 to 508 the composition is skewed to basic residues; that stretch reads RQQHRSRRSLRRRQ. The segment covering 523-532 has biased composition (basic and acidic residues); the sequence is VGKDQRRNNE. Residues 556 to 567 show a composition bias toward basic residues; it reads KPPKTNHKRGRK.

The protein belongs to the krueppel C2H2-type zinc-finger protein family.

The protein resides in the nucleus. Functionally, may be involved in transcriptional regulation. This is Zinc finger protein 512 (ZNF512) from Pongo abelii (Sumatran orangutan).